Reading from the N-terminus, the 362-residue chain is Histidine protein methyltransferase 1 homolog (362 aa).

The disordered stretch occupies residues 18-88 (TSLDDGTCVL…EACKHQPSWK (71 aa)). The span at 30–51 (QKGKQDKRQSTERPGLPRDHSW) shows a compositional bias: basic and acidic residues. Positions 52–65 (KCSSLGNAASSEDT) are enriched in polar residues. Serine 62 and serine 67 each carry phosphoserine. Residues 73 to 82 (DRSDDPEACK) show a composition bias toward basic and acidic residues. At histidine 144 the chain carries Tele-methylhistidine. Residues 158-162 (IWECT), glycine 185, and 206-208 (QDY) each bind S-adenosyl-L-methionine. The Nuclear localization signal signature appears at 237 to 243 (PDGKRQR). S-adenosyl-L-methionine contacts are provided by residues 259–261 (GEW) and serine 283.

Belongs to the methyltransferase superfamily. METTL18 family. In terms of assembly, interacts with GRWD1 and members of the heat shock protein 90 and 70 families; these proteins may possibly be methylation substrates for the enzyme. In terms of processing, monomethylated at His-144 through automethylation. Automethylation at His-144 positively regulates the methyltransferase activity toward RPL3. Probably methylated on other residues.

It localises to the cytoplasm. The protein resides in the cytosol. It is found in the nucleus. The protein localises to the nucleolus. The catalysed reaction is L-histidyl-[protein] + S-adenosyl-L-methionine = N(tele)-methyl-L-histidyl-[protein] + S-adenosyl-L-homocysteine + H(+). Its function is as follows. Protein-L-histidine N-tele-methyltransferase that specifically monomethylates RPL3, thereby regulating translation elongation. Histidine methylation of RPL3 regulates translation elongation by slowing ribosome traversal on tyrosine codons: slower elongation provides enough time for proper folding of synthesized proteins and prevents cellular aggregation of tyrosine-rich proteins. This is Histidine protein methyltransferase 1 homolog from Mus musculus (Mouse).